Here is a 381-residue protein sequence, read N- to C-terminus: Sterol 24-C-methyltransferase ERG6A (381 aa).

This sequence belongs to the class I-like SAM-binding methyltransferase superfamily. Erg6/SMT family.

It carries out the reaction lanosterol + S-adenosyl-L-methionine = eburicol + S-adenosyl-L-homocysteine + H(+). It participates in steroid metabolism; ergosterol biosynthesis. Its function is as follows. Sterol 24-C-methyltransferase; part of the third module of ergosterol biosynthesis pathway that includes the late steps of the pathway. ERG6A and ERG6B methylate lanosterol at C-24 to produce eburicol. The third module or late pathway involves the ergosterol synthesis itself through consecutive reactions that mainly occur in the endoplasmic reticulum (ER) membrane. Firstly, the squalene synthase ERG9 catalyzes the condensation of 2 farnesyl pyrophosphate moieties to form squalene, which is the precursor of all steroids. Squalene synthase is crucial for balancing the incorporation of farnesyl diphosphate (FPP) into sterol and nonsterol isoprene synthesis. Secondly, squalene is converted into lanosterol by the consecutive action of the squalene epoxidase ERG1 and the lanosterol synthase ERG7. Then, the delta(24)-sterol C-methyltransferase ERG6 methylates lanosterol at C-24 to produce eburicol. Eburicol is the substrate of the sterol 14-alpha demethylase encoded by CYP51A, CYP51B and CYP51C, to yield 4,4,24-trimethyl ergosta-8,14,24(28)-trienol. CYP51B encodes the enzyme primarily responsible for sterol 14-alpha-demethylation, and plays an essential role in ascospore formation. CYP51A encodes an additional sterol 14-alpha-demethylase, induced on ergosterol depletion and responsible for the intrinsic variation in azole sensitivity. The third CYP51 isoform, CYP51C, does not encode a sterol 14-alpha-demethylase, but is required for full virulence on host wheat ears. The C-14 reductase ERG24 then reduces the C14=C15 double bond which leads to 4,4-dimethylfecosterol. A sequence of further demethylations at C-4, involving the C-4 demethylation complex containing the C-4 methylsterol oxidases ERG25, the sterol-4-alpha-carboxylate 3-dehydrogenase ERG26 and the 3-keto-steroid reductase ERG27, leads to the production of fecosterol via 4-methylfecosterol. ERG28 has a role as a scaffold to help anchor ERG25, ERG26 and ERG27 to the endoplasmic reticulum. The C-8 sterol isomerase ERG2 then catalyzes the reaction which results in unsaturation at C-7 in the B ring of sterols and thus converts fecosterol to episterol. The sterol-C5-desaturases ERG3A and ERG3BB then catalyze the introduction of a C-5 double bond in the B ring to produce 5-dehydroepisterol. The C-22 sterol desaturases ERG5A and ERG5B further convert 5-dehydroepisterol into ergosta-5,7,22,24(28)-tetraen-3beta-ol by forming the C-22(23) double bond in the sterol side chain. Finally, ergosta-5,7,22,24(28)-tetraen-3beta-ol is substrate of the C-24(28) sterol reductase ERG4 to produce ergosterol. This is Sterol 24-C-methyltransferase ERG6A (FG02783.1) from Gibberella zeae (strain ATCC MYA-4620 / CBS 123657 / FGSC 9075 / NRRL 31084 / PH-1) (Wheat head blight fungus).